Here is a 599-residue protein sequence, read N- to C-terminus: Sulfite reductase [NADPH] flavoprotein alpha-component (599 aa).

In terms of domain architecture, Flavodoxin-like spans 64-202 (ITIISASQTG…AASEWRARVV (139 aa)). Residues 70–75 (SQTGNA), 117–120 (STQG), and 153–162 (LGDSSYEFFC) contribute to the FMN site. The FAD-binding FR-type domain maps to 234–448 (DAPLVASLSV…IEHNDNFRLP (215 aa)). FAD contacts are provided by residues Thr322, Ala356, 386 to 389 (RLYS), 404 to 406 (TVG), Tyr410, and 419 to 422 (GGAS). NADP(+) contacts are provided by residues 519–520 (SR), 525–529 (KVYVQ), and Asp561. Tyr599 is a binding site for FAD.

Belongs to the NADPH-dependent sulphite reductase flavoprotein subunit CysJ family. It in the N-terminal section; belongs to the flavodoxin family. The protein in the C-terminal section; belongs to the flavoprotein pyridine nucleotide cytochrome reductase family. Alpha(8)-beta(8). The alpha component is a flavoprotein, the beta component is a hemoprotein. The cofactor is FAD. FMN is required as a cofactor.

It carries out the reaction hydrogen sulfide + 3 NADP(+) + 3 H2O = sulfite + 3 NADPH + 4 H(+). Its pathway is sulfur metabolism; hydrogen sulfide biosynthesis; hydrogen sulfide from sulfite (NADPH route): step 1/1. Functionally, component of the sulfite reductase complex that catalyzes the 6-electron reduction of sulfite to sulfide. This is one of several activities required for the biosynthesis of L-cysteine from sulfate. The flavoprotein component catalyzes the electron flow from NADPH -&gt; FAD -&gt; FMN to the hemoprotein component. The chain is Sulfite reductase [NADPH] flavoprotein alpha-component from Shigella dysenteriae serotype 1 (strain Sd197).